The primary structure comprises 295 residues: CRISPR-associated endonuclease Cas1 2 (295 aa).

Mn(2+)-binding residues include glutamate 155, histidine 215, and glutamate 230.

It belongs to the CRISPR-associated endonuclease Cas1 family. In terms of assembly, homodimer, forms a heterotetramer with a Cas2 homodimer. Mg(2+) serves as cofactor. Requires Mn(2+) as cofactor.

Its function is as follows. CRISPR (clustered regularly interspaced short palindromic repeat), is an adaptive immune system that provides protection against mobile genetic elements (viruses, transposable elements and conjugative plasmids). CRISPR clusters contain spacers, sequences complementary to antecedent mobile elements, and target invading nucleic acids. CRISPR clusters are transcribed and processed into CRISPR RNA (crRNA). Acts as a dsDNA endonuclease. Involved in the integration of spacer DNA into the CRISPR cassette. The sequence is that of CRISPR-associated endonuclease Cas1 2 from Pyrobaculum aerophilum (strain ATCC 51768 / DSM 7523 / JCM 9630 / CIP 104966 / NBRC 100827 / IM2).